The sequence spans 130 residues: Ribosome-binding factor A (130 aa).

Belongs to the RbfA family. Monomer. Binds 30S ribosomal subunits, but not 50S ribosomal subunits or 70S ribosomes.

Its subcellular location is the cytoplasm. Its function is as follows. One of several proteins that assist in the late maturation steps of the functional core of the 30S ribosomal subunit. Associates with free 30S ribosomal subunits (but not with 30S subunits that are part of 70S ribosomes or polysomes). Required for efficient processing of 16S rRNA. May interact with the 5'-terminal helix region of 16S rRNA. The protein is Ribosome-binding factor A of Roseiflexus sp. (strain RS-1).